Reading from the N-terminus, the 887-residue chain is Lon protease homolog 2, peroxisomal (887 aa).

The 246-residue stretch at 11–256 (LGILAFRNKV…KATELVDRHL (246 aa)) folds into the Lon N-terminal domain. A disordered region spans residues 72–101 (YPGGGTDSGERNVKSQPGLSDSRKADGKSQ). 409 to 416 (GPPGVGKT) is an ATP binding site. Positions 693-878 (VSNPGVSVGL…EVLEQAFEGG (186 aa)) constitute a Lon proteolytic domain. Active-site residues include Ser784 and Lys827. A Microbody targeting signal motif is present at residues 885–887 (ARL).

It belongs to the peptidase S16 family.

It is found in the peroxisome matrix. The enzyme catalyses Hydrolysis of proteins in presence of ATP.. Functionally, ATP-dependent serine protease that mediates the selective degradation of misfolded and unassembled polypeptides in the peroxisomal matrix. Necessary for type 2 peroxisome targeting signal (PTS2)-containing protein processing and facilitates peroxisome matrix protein import. This is Lon protease homolog 2, peroxisomal from Spinacia oleracea (Spinach).